The primary structure comprises 197 residues: Small ribosomal subunit protein uS4 (197 aa).

One can recognise an S4 RNA-binding domain in the interval 88–150; that stretch reads SRLDNLVYRM…AKSLEIILDN (63 aa).

This sequence belongs to the universal ribosomal protein uS4 family. In terms of assembly, part of the 30S ribosomal subunit. Contacts protein S5. The interaction surface between S4 and S5 is involved in control of translational fidelity.

One of the primary rRNA binding proteins, it binds directly to 16S rRNA where it nucleates assembly of the body of the 30S subunit. In terms of biological role, with S5 and S12 plays an important role in translational accuracy. This Azobacteroides pseudotrichonymphae genomovar. CFP2 protein is Small ribosomal subunit protein uS4.